Here is a 209-residue protein sequence, read N- to C-terminus: Casparian strip membrane protein 1 (209 aa).

Residues M1 to G46 lie on the Cytoplasmic side of the membrane. A helical transmembrane segment spans residues I47–V67. Topologically, residues A68–T96 are extracellular. Residues F97–I117 traverse the membrane as a helical segment. Residues V118–R129 lie on the Cytoplasmic side of the membrane. The chain crosses the membrane as a helical span at residues L130 to S150. The Extracellular portion of the chain corresponds to A151–R179. A helical membrane pass occupies residues V180–L200. Over S201–H209 the chain is Cytoplasmic.

The protein belongs to the Casparian strip membrane proteins (CASP) family. Homodimer and heterodimers.

The protein resides in the cell membrane. Regulates membrane-cell wall junctions and localized cell wall deposition. Required for establishment of the Casparian strip membrane domain (CSD) and the subsequent formation of Casparian strips, a cell wall modification of the root endodermis that determines an apoplastic barrier between the intraorganismal apoplasm and the extraorganismal apoplasm and prevents lateral diffusion. The polypeptide is Casparian strip membrane protein 1 (Nicotiana tabacum (Common tobacco)).